Here is a 318-residue protein sequence, read N- to C-terminus: Myoblast determination protein 1 (318 aa).

A Peptide (Met-Gly) (interchain with G-Cter in ubiquitin) cross-link involves residue Met-1. Position 104 is an N6-methyllysine; by EHMT2 (Lys-104). The bHLH domain occupies 109–160 (DRRKAATMRERRRLSKVNEAFETLKRCTSSNPNQRLPKVEILRNAIRYIEGL). 2 disordered regions span residues 175-225 (AAFY…QNGY) and 265-318 (APAL…YQVL). A compositionally biased stretch (polar residues) spans 196–206 (SDASSPRSNCS). Positions 265 to 274 (APALLLADAP) are enriched in low complexity. Polar residues-rich tracts occupy residues 287–298 (LSDTEQGTQTPS) and 307–318 (AGSNPNAIYQVL).

In terms of assembly, interacts with SUV39H1. Efficient DNA binding requires dimerization with another bHLH protein. Seems to form active heterodimers with ITF-2. Interacts with DDX5. Interacts with CHD2. Interacts with TSC22D3 isoform 1 and isoform 4. Interacts with SETD3. Interacts with P-TEFB complex; promotes the transcriptional activity of MYOD1 through its CDK9-mediated phosphorylation. Interacts with CSRP3. Interacts with NUPR1. Post-translationally, acetylated by a complex containing EP300 and PCAF. The acetylation is essential to activate target genes. Conversely, its deacetylation by SIRT1 inhibits its function. In terms of processing, ubiquitinated on the N-terminus; which is required for proteasomal degradation. Phosphorylated by CDK9. This phosphorylation promotes its function in muscle differentiation. Post-translationally, methylation at Lys-104 by EHMT2/G9a inhibits myogenic activity.

It is found in the nucleus. Functionally, acts as a transcriptional activator that promotes transcription of muscle-specific target genes and plays a role in muscle differentiation. Together with MYF5 and MYOG, co-occupies muscle-specific gene promoter core region during myogenesis. Induces fibroblasts to differentiate into myoblasts. Interacts with and is inhibited by the twist protein. This interaction probably involves the basic domains of both proteins. In Mus musculus (Mouse), this protein is Myoblast determination protein 1 (Myod1).